A 146-amino-acid polypeptide reads, in one-letter code: SsrA-binding protein (146 aa).

Residues 127–139 (KRQTIKDRDNSRE) are compositionally biased toward basic and acidic residues. The interval 127–146 (KRQTIKDRDNSREARKHIRV) is disordered.

This sequence belongs to the SmpB family.

Its subcellular location is the cytoplasm. In terms of biological role, required for rescue of stalled ribosomes mediated by trans-translation. Binds to transfer-messenger RNA (tmRNA), required for stable association of tmRNA with ribosomes. tmRNA and SmpB together mimic tRNA shape, replacing the anticodon stem-loop with SmpB. tmRNA is encoded by the ssrA gene; the 2 termini fold to resemble tRNA(Ala) and it encodes a 'tag peptide', a short internal open reading frame. During trans-translation Ala-aminoacylated tmRNA acts like a tRNA, entering the A-site of stalled ribosomes, displacing the stalled mRNA. The ribosome then switches to translate the ORF on the tmRNA; the nascent peptide is terminated with the 'tag peptide' encoded by the tmRNA and targeted for degradation. The ribosome is freed to recommence translation, which seems to be the essential function of trans-translation. The chain is SsrA-binding protein from Malacoplasma penetrans (strain HF-2) (Mycoplasma penetrans).